A 723-amino-acid chain; its full sequence is Malate synthase G (723 aa).

Acetyl-CoA is bound by residues valine 118, arginine 125 to tyrosine 126, serine 274, and arginine 311. Arginine 338 serves as the catalytic Proton acceptor. Glyoxylate is bound by residues arginine 338, glutamate 427, and glycine 452–aspartate 455. Mg(2+) contacts are provided by glutamate 427 and aspartate 455. Position 536 (proline 536) interacts with acetyl-CoA. A Cysteine sulfenic acid (-SOH) modification is found at cysteine 617. Aspartate 631 acts as the Proton donor in catalysis. Residue cysteine 688 is modified to Cysteine sulfenic acid (-SOH).

This sequence belongs to the malate synthase family. GlcB subfamily. As to quaternary structure, monomer. Mg(2+) serves as cofactor.

It is found in the cytoplasm. It catalyses the reaction glyoxylate + acetyl-CoA + H2O = (S)-malate + CoA + H(+). It functions in the pathway carbohydrate metabolism; glyoxylate cycle; (S)-malate from isocitrate: step 2/2. Functionally, involved in the glycolate utilization. Catalyzes the condensation and subsequent hydrolysis of acetyl-coenzyme A (acetyl-CoA) and glyoxylate to form malate and CoA. This Escherichia coli O6:H1 (strain CFT073 / ATCC 700928 / UPEC) protein is Malate synthase G.